The chain runs to 435 residues: Serine--tRNA ligase (435 aa).

242 to 244 is a binding site for L-serine; the sequence is TAE. 273-275 is a binding site for ATP; it reads RSE. Glu-296 contacts L-serine. 360 to 363 provides a ligand contact to ATP; it reads EISS. Ser-396 contacts L-serine.

It belongs to the class-II aminoacyl-tRNA synthetase family. Type-1 seryl-tRNA synthetase subfamily. As to quaternary structure, homodimer. The tRNA molecule binds across the dimer.

It is found in the cytoplasm. It carries out the reaction tRNA(Ser) + L-serine + ATP = L-seryl-tRNA(Ser) + AMP + diphosphate + H(+). It catalyses the reaction tRNA(Sec) + L-serine + ATP = L-seryl-tRNA(Sec) + AMP + diphosphate + H(+). It participates in aminoacyl-tRNA biosynthesis; selenocysteinyl-tRNA(Sec) biosynthesis; L-seryl-tRNA(Sec) from L-serine and tRNA(Sec): step 1/1. In terms of biological role, catalyzes the attachment of serine to tRNA(Ser). Is also able to aminoacylate tRNA(Sec) with serine, to form the misacylated tRNA L-seryl-tRNA(Sec), which will be further converted into selenocysteinyl-tRNA(Sec). The sequence is that of Serine--tRNA ligase from Aliivibrio salmonicida (strain LFI1238) (Vibrio salmonicida (strain LFI1238)).